A 165-amino-acid polypeptide reads, in one-letter code: Small ribosomal subunit protein uS17m (165 aa).

This sequence belongs to the universal ribosomal protein uS17 family. As to quaternary structure, component of the mitochondrial small ribosomal subunit (mt-SSU). Mature N.crassa 74S mitochondrial ribosomes consist of a small (37S) and a large (54S) subunit. The 37S small subunit contains a 16S ribosomal RNA (16S mt-rRNA) and 32 different proteins. The 54S large subunit contains a 23S rRNA (23S mt-rRNA) and 42 different proteins. uS17m interacts with the F(1)-ATPase inhibitor IF(1) dimer.

It is found in the mitochondrion. Component of the mitochondrial ribosome (mitoribosome), a dedicated translation machinery responsible for the synthesis of mitochondrial genome-encoded proteins, including at least some of the essential transmembrane subunits of the mitochondrial respiratory chain. The mitoribosomes are attached to the mitochondrial inner membrane and translation products are cotranslationally integrated into the membrane. The polypeptide is Small ribosomal subunit protein uS17m (mrps17) (Neurospora crassa (strain ATCC 24698 / 74-OR23-1A / CBS 708.71 / DSM 1257 / FGSC 987)).